A 215-amino-acid chain; its full sequence is Putative ribosome biogenesis protein slx9-like (215 aa).

3 disordered regions span residues 49–121 (IIPS…GLGM), 133–157 (DSMKLQPKTKGPKLTNEKRKKMSLK), and 189–215 (LQNQKIKQEQDFKPNNNNNNRNKLKRK).

This sequence belongs to the SLX9 family.

The protein resides in the nucleus. It localises to the nucleolus. Functionally, involved in ribosome biogenesis. The polypeptide is Putative ribosome biogenesis protein slx9-like (Dictyostelium discoideum (Social amoeba)).